The chain runs to 252 residues: 2,5-diamino-6-ribosylamino-4(3H)-pyrimidinone 5'-phosphate reductase (252 aa).

NADP(+) contacts are provided by residues threonine 80, aspartate 84, valine 166, and 189 to 193 (GGIVI).

It belongs to the HTP reductase family. Homodimer.

The catalysed reaction is 2,5-diamino-6-(1-D-ribitylamino)pyrimidin-4(3H)-one 5'-phosphate + NADP(+) = 2,5-diamino-6-(1-D-ribosylamino)pyrimidin-4(3H)-one 5'-phosphate + NADPH + H(+). It catalyses the reaction 2,5-diamino-6-(1-D-ribitylamino)pyrimidin-4(3H)-one 5'-phosphate + NAD(+) = 2,5-diamino-6-(1-D-ribosylamino)pyrimidin-4(3H)-one 5'-phosphate + NADH + H(+). The protein operates within cofactor biosynthesis; riboflavin biosynthesis. In terms of biological role, catalyzes an early step in riboflavin biosynthesis, the NADPH-dependent reduction of the ribose side chain of 2,5-diamino-6-ribosylamino-4(3H)-pyrimidinone 5'-phosphate, yielding 2,5-diamino-6-ribitylamino-4(3H)-pyrimidinone 5'-phosphate. The protein is 2,5-diamino-6-ribosylamino-4(3H)-pyrimidinone 5'-phosphate reductase (RIB7) of Kluyveromyces lactis (strain ATCC 8585 / CBS 2359 / DSM 70799 / NBRC 1267 / NRRL Y-1140 / WM37) (Yeast).